The primary structure comprises 342 residues: Putative anthocyanidin reductase (342 aa).

Residues R44, K51, 71–72 (EL), 91–93 (VAT), Y172, K176, 199–202 (PVLV), and S214 each bind NADP(+). K176 functions as the Proton donor in the catalytic mechanism.

Belongs to the NAD(P)-dependent epimerase/dehydratase family. Dihydroflavonol-4-reductase subfamily. In terms of tissue distribution, highly expressed in leaves and weakly in stems. Not expressed in roots.

It participates in secondary metabolite biosynthesis; flavonoid biosynthesis. The protein is Putative anthocyanidin reductase of Ginkgo biloba (Ginkgo).